Here is a 937-residue protein sequence, read N- to C-terminus: Periplasmic nitrate reductase (937 aa).

The tat-type signal signal peptide spans 1 to 31; it reads MSMNRREFLKTTAAAAAASAVGISIPSEAKA. A 4Fe-4S Mo/W bis-MGD-type domain is found at 40–96; sequence WQWDKAVCRFCGTGCGIMVAVKDDKIVAVKGDPESPVNRGINCIKGYFNAKIMYGAD. [4Fe-4S] cluster contacts are provided by C47, C50, C54, and C82. Mo-bis(molybdopterin guanine dinucleotide) contacts are provided by residues K84, Q152, N177, C181, 214–221, M422, Q426, N532, K580, D607, and 827–836; these read WGANMAEM and TGRVLEHWHS. Substrate is bound at residue W903. N911 and K928 together coordinate Mo-bis(molybdopterin guanine dinucleotide).

Belongs to the prokaryotic molybdopterin-containing oxidoreductase family. NasA/NapA/NarB subfamily. As to quaternary structure, component of the periplasmic nitrate reductase NapAB complex composed of NapA and NapB. [4Fe-4S] cluster is required as a cofactor. Requires Mo-bis(molybdopterin guanine dinucleotide) as cofactor. In terms of processing, predicted to be exported by the Tat system. The position of the signal peptide cleavage has not been experimentally proven.

The protein resides in the periplasm. The catalysed reaction is 2 Fe(II)-[cytochrome] + nitrate + 2 H(+) = 2 Fe(III)-[cytochrome] + nitrite + H2O. Functionally, catalytic subunit of the periplasmic nitrate reductase complex NapAB. Receives electrons from NapB and catalyzes the reduction of nitrate to nitrite. The polypeptide is Periplasmic nitrate reductase (Nautilia profundicola (strain ATCC BAA-1463 / DSM 18972 / AmH)).